The sequence spans 310 residues: Putative S-adenosyl-L-methionine-dependent methyltransferase MUL_4763 (310 aa).

Residues Asp137 and Asp166–Leu167 contribute to the S-adenosyl-L-methionine site.

It belongs to the UPF0677 family.

Exhibits S-adenosyl-L-methionine-dependent methyltransferase activity. The sequence is that of Putative S-adenosyl-L-methionine-dependent methyltransferase MUL_4763 from Mycobacterium ulcerans (strain Agy99).